Consider the following 585-residue polypeptide: Arginine--tRNA ligase (585 aa).

Positions 131–141 match the 'HIGH' region motif; it reads ANPTGPMHVGH.

The protein belongs to the class-I aminoacyl-tRNA synthetase family. Monomer.

The protein localises to the cytoplasm. It carries out the reaction tRNA(Arg) + L-arginine + ATP = L-arginyl-tRNA(Arg) + AMP + diphosphate. This Rhizobium etli (strain CIAT 652) protein is Arginine--tRNA ligase.